A 441-amino-acid polypeptide reads, in one-letter code: Endoglucanase E-2 (441 aa).

A signal peptide (tat-type signal) is located at residues 1–31 (MSPRPLRALLGAAAAALVSAAALAFPSQAAA). Residues 32–320 (NDSPFYVNPN…YEMAIAAGGT (289 aa)) form a catalytic region. Residue Asp-110 is part of the active site. Disulfide bonds link Cys-111-Cys-156 and Cys-263-Cys-298. The Proton donor role is filled by Asp-148. Asp-296 serves as the catalytic Nucleophile. The segment at 317–343 (AGGTNPNPNPNPTPTPTPTPTPPPGSS) is disordered. The interval 321 to 340 (NPNPNPNPTPTPTPTPTPPP) is linker. Residues 323-341 (NPNPNPTPTPTPTPTPPPG) show a composition bias toward pro residues. Residues 339–441 (PPGSSGACTA…SVPTLTCAAS (103 aa)) form the CBM2 domain. Residues Cys-346 and Cys-438 are joined by a disulfide bond.

It belongs to the glycosyl hydrolase 6 (cellulase B) family. Homodimer. In terms of processing, predicted to be exported by the Tat system. The position of the signal peptide cleavage has been experimentally proven.

The enzyme catalyses Endohydrolysis of (1-&gt;4)-beta-D-glucosidic linkages in cellulose, lichenin and cereal beta-D-glucans.. The protein operates within glycan metabolism; cellulose degradation. The chain is Endoglucanase E-2 (celB) from Thermobifida fusca (Thermomonospora fusca).